The following is a 422-amino-acid chain: UDP-N-acetylglucosamine 1-carboxyvinyltransferase (422 aa).

Phosphoenolpyruvate is bound at residue 22–23 (KN). Position 93 (Arg93) interacts with UDP-N-acetyl-alpha-D-glucosamine. The active-site Proton donor is Cys117. Cys117 bears the 2-(S-cysteinyl)pyruvic acid O-phosphothioketal mark. UDP-N-acetyl-alpha-D-glucosamine contacts are provided by residues 122 to 126 (RPVDL), Asp308, and Ile330.

Belongs to the EPSP synthase family. MurA subfamily.

Its subcellular location is the cytoplasm. It carries out the reaction phosphoenolpyruvate + UDP-N-acetyl-alpha-D-glucosamine = UDP-N-acetyl-3-O-(1-carboxyvinyl)-alpha-D-glucosamine + phosphate. The protein operates within cell wall biogenesis; peptidoglycan biosynthesis. Cell wall formation. Adds enolpyruvyl to UDP-N-acetylglucosamine. The chain is UDP-N-acetylglucosamine 1-carboxyvinyltransferase from Legionella pneumophila (strain Paris).